Consider the following 339-residue polypeptide: Probable thylakoid lumen protein sll0997 (339 aa).

A signal peptide spans 1–26; the sequence is MAPYQSFHIGLLGLALASVWPLSACA.

The protein localises to the cellular thylakoid lumen. In Synechocystis sp. (strain ATCC 27184 / PCC 6803 / Kazusa), this protein is Probable thylakoid lumen protein sll0997.